Consider the following 145-residue polypeptide: Transcription antitermination protein NusB (145 aa).

It belongs to the NusB family.

Functionally, involved in transcription antitermination. Required for transcription of ribosomal RNA (rRNA) genes. Binds specifically to the boxA antiterminator sequence of the ribosomal RNA (rrn) operons. In Burkholderia cenocepacia (strain HI2424), this protein is Transcription antitermination protein NusB.